We begin with the raw amino-acid sequence, 325 residues long: Olfactory receptor 10AC1 (325 aa).

Topologically, residues 1–26 (MDSPSNATVPCGFLLQGFSEFPHLRP) are extracellular. The N-linked (GlcNAc...) asparagine glycan is linked to Asn6. Residues 27–47 (VLFLLLLGVHLATLGGNLLIL) form a helical membrane-spanning segment. Topologically, residues 48 to 57 (VAVASMPSRQ) are cytoplasmic. A helical transmembrane segment spans residues 58–78 (PMLLFLCQLSAIELCYTLVVV). At 79-101 (PRSLVDLSTPGHRRGSPISFLSC) the chain is on the extracellular side. A helical transmembrane segment spans residues 102-122 (AFQMQMFVALGGAECFLLAAM). Residues 123–147 (AYDRYVAICHPLRYAAVVTPGLCAR) are Cytoplasmic-facing. A helical membrane pass occupies residues 148–168 (LALACCLRGLAVSVGLTVAIF). The Extracellular portion of the chain corresponds to 169 to 171 (HLP). Residues 172–192 (FCGSRLLLHFFCDITALLHLA) traverse the membrane as a helical segment. Topologically, residues 193–200 (CTRSYADE) are cytoplasmic. Residues 201-221 (LPLLGACLVLLLLPSVLILAS) form a helical membrane-spanning segment. The Extracellular portion of the chain corresponds to 222-243 (YGAIAAALRRLRCPKGRGKAAS). Residues 244-264 (TCALHLAVTFLHYGCATFMYV) form a helical membrane-spanning segment. The Cytoplasmic portion of the chain corresponds to 265–325 (RPRASYSPRL…QAPGGDLREL (61 aa)).

This sequence belongs to the G-protein coupled receptor 1 family.

Its subcellular location is the cell membrane. In terms of biological role, odorant receptor. The protein is Olfactory receptor 10AC1 (OR10AC1) of Homo sapiens (Human).